We begin with the raw amino-acid sequence, 335 residues long: Probable cyclin-H (335 aa).

This sequence belongs to the cyclin family. Cyclin C subfamily.

The protein localises to the nucleus. Functionally, regulates CDK7, the catalytic subunit of the CDK-activating kinase (CAK) enzymatic complex. The chain is Probable cyclin-H (CYCH) from Echinococcus multilocularis (Fox tapeworm).